The sequence spans 956 residues: Calsyntenin-3 (956 aa).

Residues 1-19 form the signal peptide; the sequence is MTLLLLPLLLASLLASCSC. At 1–30 the chain is on the cytoplasmic side; that stretch reads MTLLLLPLLLASLLASCSCNKANKHKPWIE. Residues 20–847 are Extracellular-facing; the sequence is NKANKHKPWI…SHRNSMIPSA (828 aa). 2 consecutive Cadherin domains span residues 29–145 and 146–246; these read IEAE…APVF and VERL…KPSW. The segment at residues 31-51 is an intramembrane region (helical); that stretch reads AEYQGIVMENDNTVLLNPPLF. The Cytoplasmic segment spans residues 52 to 71; that stretch reads ALDKDAPLRYAGEICGFRLH. An intramembrane region (helical) is located at residues 72 to 94; it reads GSGVPFEAVILDKATGEGLIRAK. At 95–151 the chain is on the cytoplasmic side; the sequence is EPVDCEAQKEHTFTIQAYDCGEGPDGANTKKSHKATVHVRVNDVNEFAPVFVERLYR. The segment at residues 152–172 is an intramembrane region (helical); that stretch reads AAVTEGKLYDRILRVEAIDGD. The Cytoplasmic portion of the chain corresponds to 173–255; sequence CSPQYSQICY…WQGWNKRIEY (83 aa). Residues 256-276 form a helical membrane-spanning segment; the sequence is APGAGSLALFPGIRLETCDEP. Topologically, residues 277–364 are lumenal; it reads LWNIQATIEL…PLGGPSGLGS (88 aa). Residues Asn299, Asn327, Asn347, Asn507, and Asn740 are each glycosylated (N-linked (GlcNAc...) asparagine). The chain crosses the membrane as a helical span at residues 848-868; it reads ATLIIVVCVGFLVLMVVLGLV. Residues 869 to 956 are Cytoplasmic-facing; that stretch reads RIHSLHRRVS…RIIETPPHRY (88 aa). Residues 916–956 are disordered; it reads QSCVTGAVGGQQEDEDSSDSEVADSPSSDERRIIETPPHRY. Positions 927–937 are enriched in acidic residues; it reads QEDEDSSDSEV. The segment covering 943–956 has biased composition (basic and acidic residues); it reads SDERRIIETPPHRY.

Belongs to the calsyntenin family. Interacts (via cadherin domains) with both alpha and beta isoforms of neurexins (NRXN1, NRXN2 and NRXN3). Directly interacts with APBA2. Forms a tripartite complex with APBA2 and APP. Interacts with low affinity with KLC1. Interacts with SLC23A2/SVCT2. As to quaternary structure, interacts with CIDEA; inhibiting the lipid transferase activity of CIDEA. Interacts with CIDEC; inhibiting the lipid transferase activity of CIDEC. Post-translationally, proteolytically processed under normal cellular conditions. A primary zeta-cleavage generates a large extracellular (soluble) N-terminal domain (sAlc) and a short C-terminal transmembrane fragment (CTF1). A secondary cleavage catalyzed by gamma-secretase within the transmembrane domain releases the beta-Alc-beta chain in the extracellular milieu and produces an intracellular fragment (AlcICD). This processing is strongly suppressed in the tripartite complex formed with APBA2 and APP, which seems to prevent the association with gamma-secretase. In terms of processing, ubiquitinated: endoplasmic reticulum-localized protein is ubiquitinated and degraded by the endoplasmic reticulum-associated degradation (ERAD) pathway. According to PubMed:12498782, expressed predominantly in the brain and in kidney. Low levels in heart, skeletal muscle, liver, placenta, pancreas and lung. According to PubMed:12972431, predominant expression in brain, and only marginal in kidney. In brain, present throughout all cortical layers, highest levels in GABAergic neurons (based on morphology and distribution pattern). In terms of tissue distribution, expression is restricted to adipose tissue, with high expression in multilocular thermogenic adipocytes (brown adipose tissue).

It is found in the postsynaptic cell membrane. The protein resides in the endoplasmic reticulum membrane. The protein localises to the golgi apparatus membrane. Its subcellular location is the cell projection. It localises to the dendrite. It is found in the lipid droplet. Postsynaptic adhesion molecule that binds to presynaptic neurexins to mediate both excitatory and inhibitory synapse formation. Promotes synapse development by acting as a cell adhesion molecule at the postsynaptic membrane, which associates with both neurexin-alpha and neurexin-beta proteins at the presynaptic membrane. Regulates the balance between excitatory and inhibitory synapses by inhibiting formation of excitatory parallel-fiber synapses and promoting formation of inhibitory synapses in the same neuron. May also be involved in ascorbate (vitamin C) uptake via its interaction with SLC23A2/SVCT2. Complex formation with APBA2 and APP, stabilizes APP metabolism and enhances APBA2-mediated suppression of beta-APP40 secretion, due to the retardation of intracellular APP maturation. In terms of biological role, adipose-specific isoform that plays a key role in adaptive thermogenesis. Facilitates the efficient use of stored triglyceride by promoting multilocular morphology of thermogenic adipocytes: acts by inhibiting the activity of CIDEA and CIDEC on lipid droplets, thereby preventing lipid droplet fusion and facilitating lipid utilization. May also participate in adaptive thermogenesis by promoting sympathetic innervation of thermogenic adipose tissue: acts by driving secretion of neurotrophic factor S100B from brown adipocytes, stimulating neurite outgrowth from sympathetic neurons. The protein is Calsyntenin-3 of Homo sapiens (Human).